Reading from the N-terminus, the 129-residue chain is uncharacterized protein (129 aa).

It is found in the cytoplasm. Its subcellular location is the cytosol. It localises to the nucleus. This is an uncharacterized protein from Schizosaccharomyces pombe (strain 972 / ATCC 24843) (Fission yeast).